We begin with the raw amino-acid sequence, 468 residues long: UDP-N-acetylmuramate--L-alanine ligase (468 aa).

Position 112–118 (112–118 (GTHGKTT)) interacts with ATP.

This sequence belongs to the MurCDEF family.

The protein resides in the cytoplasm. It carries out the reaction UDP-N-acetyl-alpha-D-muramate + L-alanine + ATP = UDP-N-acetyl-alpha-D-muramoyl-L-alanine + ADP + phosphate + H(+). Its pathway is cell wall biogenesis; peptidoglycan biosynthesis. In terms of biological role, cell wall formation. This is UDP-N-acetylmuramate--L-alanine ligase from Neisseria meningitidis serogroup C (strain 053442).